We begin with the raw amino-acid sequence, 157 residues long: SsrA-binding protein (157 aa).

This sequence belongs to the SmpB family.

It is found in the cytoplasm. In terms of biological role, required for rescue of stalled ribosomes mediated by trans-translation. Binds to transfer-messenger RNA (tmRNA), required for stable association of tmRNA with ribosomes. tmRNA and SmpB together mimic tRNA shape, replacing the anticodon stem-loop with SmpB. tmRNA is encoded by the ssrA gene; the 2 termini fold to resemble tRNA(Ala) and it encodes a 'tag peptide', a short internal open reading frame. During trans-translation Ala-aminoacylated tmRNA acts like a tRNA, entering the A-site of stalled ribosomes, displacing the stalled mRNA. The ribosome then switches to translate the ORF on the tmRNA; the nascent peptide is terminated with the 'tag peptide' encoded by the tmRNA and targeted for degradation. The ribosome is freed to recommence translation, which seems to be the essential function of trans-translation. The polypeptide is SsrA-binding protein (Limosilactobacillus fermentum (strain NBRC 3956 / LMG 18251) (Lactobacillus fermentum)).